The primary structure comprises 323 residues: Methionyl-tRNA formyltransferase (323 aa).

Residue 121-124 participates in (6S)-5,6,7,8-tetrahydrofolate binding; that stretch reads SLLP.

It belongs to the Fmt family.

It catalyses the reaction L-methionyl-tRNA(fMet) + (6R)-10-formyltetrahydrofolate = N-formyl-L-methionyl-tRNA(fMet) + (6S)-5,6,7,8-tetrahydrofolate + H(+). Functionally, attaches a formyl group to the free amino group of methionyl-tRNA(fMet). The formyl group appears to play a dual role in the initiator identity of N-formylmethionyl-tRNA by promoting its recognition by IF2 and preventing the misappropriation of this tRNA by the elongation apparatus. The protein is Methionyl-tRNA formyltransferase of Desulfotalea psychrophila (strain LSv54 / DSM 12343).